The primary structure comprises 337 residues: Equatorin (337 aa).

The first 20 residues, 1–20, serve as a signal peptide directing secretion; sequence MDFILLIILSGVFLPDIISL. Residues 21–183 lie on the Lumenal side of the membrane; sequence QPIVGQEPGV…LSELEEIKLK (163 aa). The tract at residues 110 to 130 is disordered; sequence SKPTASGEEEKPSESSRKTST. Residues 117-126 show a composition bias toward basic and acidic residues; it reads EEEKPSESSR. N-linked (GlcNAc...) asparagine glycosylation is present at N145. The helical transmembrane segment at 184–204 threads the bilayer; sequence LMLGISLMTLVLLIPLLIFCF. The Cytoplasmic segment spans residues 205–337; the sequence is ATLYKLRHLR…LLNKEGSPSN (133 aa). A disordered region spans residues 259-283; it reads SSEMRRSRTRRSKSKPMDFSAGSNQ. The residue at position 336 (S336) is a Phosphoserine.

As to quaternary structure, interacts with SNAP25. Highly N- and O-glycosylated; contains sialic acid. MN9 epitope is O-glycosylated. Sperm specific, including germ cells (at protein level).

The protein resides in the cytoplasmic vesicle. It is found in the secretory vesicle. The protein localises to the acrosome membrane. It localises to the acrosome inner membrane. Its subcellular location is the acrosome outer membrane. The protein resides in the nucleus. It is found in the cytoplasm. In terms of biological role, acrosomal membrane-anchored protein involved in the process of fertilization and in acrosome biogenesis. The polypeptide is Equatorin (Eqtn) (Mus musculus (Mouse)).